A 130-amino-acid polypeptide reads, in one-letter code: Small ribosomal subunit protein uS11 (130 aa).

Belongs to the universal ribosomal protein uS11 family. In terms of assembly, part of the 30S ribosomal subunit. Interacts with proteins S7 and S18. Binds to IF-3.

In terms of biological role, located on the platform of the 30S subunit, it bridges several disparate RNA helices of the 16S rRNA. Forms part of the Shine-Dalgarno cleft in the 70S ribosome. This chain is Small ribosomal subunit protein uS11, found in Prochlorococcus marinus subsp. pastoris (strain CCMP1986 / NIES-2087 / MED4).